A 562-amino-acid chain; its full sequence is MAAKQIVFSRGARAAILKGVNTLADAVKVTLGPKGRNVVIEKSWGSPVVTKDGVTVAKEVELAGKLENMGAQMVREVASKTSDKAGDGTTTATVLAQAIFGEGLKLVEAGHNPMDLKRGIDAAVAKVIEAVQKAAKPTKDKDQIAQVATVSANGDKEIGQILADAMEKVGKEGVITVEENKRMTTELETVDGMQFDRGYLSPYFVTDPEKMTAVLTNPLILVHEKKISAMADLLPLLEQVVKQGRELLILSEDVEGEALATLVVNKLRGTIKVAAVKAPGFGDRRKDMLKDIAILTGATPFMEDLGQKLESATVRDLGTAKRVEIDKDNTVIVDGQGDKTAIKGRIEAIRKQIADTTSDYDREKLQERLAKLAGGVAVVKVGAATETEMKEKKARVEDALHATRAAVEEGIVVGGGVALFRAAASLESLKFNDERDVGVRLVRRAVEAPLRQIAQNAGVDGTVVAEKVRSGAPTFGYNAATDSYEDLLAGGVIDPAKVVRHAISNAASVAALMLTTEALVAEKPKKEKAAAGGAPGGMGGMGGMGGMGGMGGMGGMGDFDMG.

ATP-binding positions include 30–33 (TLGP), K51, 87–91 (DGTTT), G415, 478–480 (NAA), and D494.

This sequence belongs to the chaperonin (HSP60) family. Forms a cylinder of 14 subunits composed of two heptameric rings stacked back-to-back. Interacts with the co-chaperonin GroES.

The protein resides in the cytoplasm. The catalysed reaction is ATP + H2O + a folded polypeptide = ADP + phosphate + an unfolded polypeptide.. Its function is as follows. Together with its co-chaperonin GroES, plays an essential role in assisting protein folding. The GroEL-GroES system forms a nano-cage that allows encapsulation of the non-native substrate proteins and provides a physical environment optimized to promote and accelerate protein folding. This is Chaperonin GroEL 1 from Sorangium cellulosum (strain So ce56) (Polyangium cellulosum (strain So ce56)).